The chain runs to 442 residues: Vacuolar zinc transporter ZRC1 (442 aa).

Residues 1 to 8 are Cytoplasmic-facing; that stretch reads MITGKELR. Residues 9-29 traverse the membrane as a helical segment; that stretch reads IISLLTLDTVFFLLEITIGYM. At 30–32 the chain is on the vacuolar side; that stretch reads SHS. Residues 33-53 traverse the membrane as a helical segment; it reads LALIADSFHMLNDIISLLVAL. The Cytoplasmic portion of the chain corresponds to 54–75; the sequence is WAVDVAKNRGPDAKYTYGWKRA. A helical membrane pass occupies residues 76–96; that stretch reads EILGALINAVFLIALCFSIMI. Residues 97 to 112 lie on the Vacuolar side of the membrane; the sequence is EALQRLIEPQEIQNPR. Residues 113 to 133 traverse the membrane as a helical segment; that stretch reads LVLYVGVAGLISNVVGLFLFH. Over 134–235 the chain is Cytoplasmic; the sequence is DHGSDSLHSH…GHRSLNMHGV (102 aa). Short sequence motifs (histidine repeat) lie at residues 141–145, 163–167, and 216–220; these read HSHSH and HDHSH. Disordered regions lie at residues 141 to 170 and 208 to 227; these read HSHS…HASL and QPLL…KPGH. Positions 149–170 are enriched in polar residues; the sequence is ESGNNDLDIESNATHSHSHASL. Residues 212 to 224 show a composition bias toward basic and acidic residues; it reads NHDDHDHSHESKK. Residues 236-256 form a helical membrane-spanning segment; the sequence is FLHVLGDALGNIGVIAAALFI. Topologically, residues 257–265 are vacuolar; sequence WKTEYSWRY. The helical transmembrane segment at 266 to 286 threads the bilayer; that stretch reads YSDPIVSLIITIIIFSSALPL. Residues 287–442 are Cytoplasmic-facing; that stretch reads SRRASRILLQ…AVNCNTSNCL (156 aa). K357 participates in a covalent cross-link: Glycyl lysine isopeptide (Lys-Gly) (interchain with G-Cter in ubiquitin). 3 positions are modified to phosphoserine: S387, S393, and S397. Positions 391-419 are disordered; it reads GGSPSSSQEAFDSHGNTEHGRKKRSPTAY.

It belongs to the cation diffusion facilitator (CDF) transporter (TC 2.A.4) family. SLC30A subfamily.

The protein resides in the vacuole membrane. The enzyme catalyses Zn(2+)(in) = Zn(2+)(out). In terms of biological role, vacuolar transporter that regulates zinc homeostasis by mediating zinc transport and storage into the vacuole. ZRC1 senses zinc availability in the cytosol, which might be performed through the histidine repeat motifs, and transports zinc from the cytosol to the vacuole if zinc in cytosol is abundant, conferring resistance to zinc toxicity. Plays a role in resistance to zinc shock resulting from sudden influx of zinc into cytoplasm when ZRT1 and ZRT2 are induced in response to zinc depletion. This Saccharomyces cerevisiae (strain ATCC 204508 / S288c) (Baker's yeast) protein is Vacuolar zinc transporter ZRC1.